Consider the following 232-residue polypeptide: MTVVDAESRFHVLAVDDSLIDRKLIEMLLKNSSYQVTTVDSGSKALELLGLRDEGDDSSSSPSSSSPDHQEIDVNLIITDYCMPGMTGYDLLKRVKGSSSLKDIPVVIMSSENVPARINRCLEDGAEEFFLKPVKLADMKKLKSHLLKRKQQLPMAAAAPDKPPHKPDEAAASAAAIAEAATAQTDGIISDCSCSGSSKRKAAAMEQEVISSPDQRTKPRLSSTSSGLAVET.

The Response regulatory domain maps to 11 to 147 (HVLAVDDSLI…DMKKLKSHLL (137 aa)). At aspartate 80 the chain carries 4-aspartylphosphate. 2 disordered regions span residues 153–174 (LPMAAAAPDKPPHKPDEAAASA) and 202–232 (AAAMEQEVISSPDQRTKPRLSSTSSGLAVET). Polar residues predominate over residues 209–232 (VISSPDQRTKPRLSSTSSGLAVET).

Belongs to the ARR family. Type-A subfamily. Two-component system major event consists of a His-to-Asp phosphorelay between a sensor histidine kinase (HK) and a response regulator (RR). In plants, the His-to-Asp phosphorelay involves an additional intermediate named Histidine-containing phosphotransfer protein (HPt). This multistep phosphorelay consists of a His-Asp-His-Asp sequential transfer of a phosphate group between first a His and an Asp of the HK protein, followed by the transfer to a conserved His of the HPt protein and finally the transfer to an Asp in the receiver domain of the RR protein. As to expression, expressed in mature leaves and flowers, and at low levels in roots and shoots.

Functions as a response regulator involved in His-to-Asp phosphorelay signal transduction system. Phosphorylation of the Asp residue in the receiver domain activates the ability of the protein to promote the transcription of target genes. Type-A response regulators seem to act as negative regulators of the cytokinin signaling. The chain is Two-component response regulator ORR4 from Oryza sativa subsp. indica (Rice).